We begin with the raw amino-acid sequence, 788 residues long: MEKTNRKKLFDEDIDYVNEDHISSFAKALAWEEQYEILENEKSGASSDKESQDAATIQKETEELDDLGADELSTALNGMHKPDLISSKSDWWPINTSKSIPKTKIRKKSKKSSVNEGHSKITNEFRSSASYTMLRWPILIFISCWISLLCFMYIIVRAYVALSEYFLTWVGKRKELRNKLRASQNYEEWVQNALELDRFLNLDKWSENPKFSYYDSKTVELTISKLASLREEGRDNDLMVILQGCIKKNFAGIENRQLYSHRYYGTKYLVEKYIDEVIVCIDKVIESQQISFNDKRRFFRTVSKNYGKTALCLSGGACFTYTHFGIVKALLDNDLLPSIISGTSGGGLIAALSCTRTDDELKKLLVPELARKITACEDPWYVWIPRWWRTGARFDSLEWARKANFFTRGSTTFYESFKRTGRRLNISTVPSNPHSPVILCNNITSPNCIIWSSLLASSAVPGILNPVVLLMKDLKTDRVVPFSLGSKWRDGSLRTDIPIDALNTYYNVNFSIVSQVNPHISLFFFAPKGTVGRPVAIPRRKTHKEKYASLRGGFIATALEQLFKLEITKWLQMIKSLDLLPHLLEQDWSNIWLQRFSGSITIWPRNRLKDFWYILSDPTEERLAEMLSKGERAMFPRILFVKHRLSIEKAIEKGRKQTKLSANFNTLTSSDSGRTELSPEAAELQVEPAMFDDDEYDSDSSDDEVLSPNNKKHIDKFGTPNTEDGDDDEDAYEYYDDDDYGLSTEDEANQENTGNSQGEENDTGSRFLKSFFRAGSRDSKLHRRNTVF.

The chain crosses the membrane as a helical span at residues 136–156; it reads WPILIFISCWISLLCFMYIIV. Residues 311-503 form the PNPLA domain; the sequence is LCLSGGACFT…RTDIPIDALN (193 aa). The GXSXG signature appears at 342-346; the sequence is GTSGG. Ser-344 acts as the Nucleophile in catalysis. The active-site Proton acceptor is Asp-490. Positions 662-672 are enriched in polar residues; that stretch reads ANFNTLTSSDS. The segment at 662–771 is disordered; sequence ANFNTLTSSD…DTGSRFLKSF (110 aa). Acidic residues-rich tracts occupy residues 690–705 and 723–749; these read MFDD…DDEV and EDGD…DEAN.

This sequence belongs to the PLPL family.

The protein localises to the membrane. Probable lipid hydrolase. This chain is Patatin-like phospholipase domain-containing protein DEHA2B04136g, found in Debaryomyces hansenii (strain ATCC 36239 / CBS 767 / BCRC 21394 / JCM 1990 / NBRC 0083 / IGC 2968) (Yeast).